Reading from the N-terminus, the 209-residue chain is Thiamine-phosphate synthase (209 aa).

4-amino-2-methyl-5-(diphosphooxymethyl)pyrimidine-binding positions include 36–40 (QYRDK) and Asn-68. Positions 69 and 87 each coordinate Mg(2+). Thr-106 is a binding site for 4-amino-2-methyl-5-(diphosphooxymethyl)pyrimidine. 133 to 135 (SST) is a 2-[(2R,5Z)-2-carboxy-4-methylthiazol-5(2H)-ylidene]ethyl phosphate binding site. A 4-amino-2-methyl-5-(diphosphooxymethyl)pyrimidine-binding site is contributed by Lys-136. Position 163 (Gly-163) interacts with 2-[(2R,5Z)-2-carboxy-4-methylthiazol-5(2H)-ylidene]ethyl phosphate.

Belongs to the thiamine-phosphate synthase family. Requires Mg(2+) as cofactor.

It catalyses the reaction 2-[(2R,5Z)-2-carboxy-4-methylthiazol-5(2H)-ylidene]ethyl phosphate + 4-amino-2-methyl-5-(diphosphooxymethyl)pyrimidine + 2 H(+) = thiamine phosphate + CO2 + diphosphate. The enzyme catalyses 2-(2-carboxy-4-methylthiazol-5-yl)ethyl phosphate + 4-amino-2-methyl-5-(diphosphooxymethyl)pyrimidine + 2 H(+) = thiamine phosphate + CO2 + diphosphate. It carries out the reaction 4-methyl-5-(2-phosphooxyethyl)-thiazole + 4-amino-2-methyl-5-(diphosphooxymethyl)pyrimidine + H(+) = thiamine phosphate + diphosphate. It functions in the pathway cofactor biosynthesis; thiamine diphosphate biosynthesis; thiamine phosphate from 4-amino-2-methyl-5-diphosphomethylpyrimidine and 4-methyl-5-(2-phosphoethyl)-thiazole: step 1/1. Functionally, condenses 4-methyl-5-(beta-hydroxyethyl)thiazole monophosphate (THZ-P) and 2-methyl-4-amino-5-hydroxymethyl pyrimidine pyrophosphate (HMP-PP) to form thiamine monophosphate (TMP). This is Thiamine-phosphate synthase from Pseudomonas aeruginosa (strain LESB58).